The chain runs to 427 residues: Glutamate-1-semialdehyde 2,1-aminomutase (427 aa).

Residue Lys264 is modified to N6-(pyridoxal phosphate)lysine.

Belongs to the class-III pyridoxal-phosphate-dependent aminotransferase family. HemL subfamily. In terms of assembly, homodimer. It depends on pyridoxal 5'-phosphate as a cofactor.

The protein resides in the cytoplasm. The catalysed reaction is (S)-4-amino-5-oxopentanoate = 5-aminolevulinate. It participates in porphyrin-containing compound metabolism; protoporphyrin-IX biosynthesis; 5-aminolevulinate from L-glutamyl-tRNA(Glu): step 2/2. The protein is Glutamate-1-semialdehyde 2,1-aminomutase of Clostridium botulinum (strain Alaska E43 / Type E3).